The sequence spans 109 residues: UPF0060 membrane protein YfjF (109 aa).

The next 4 helical transmembrane spans lie at 6-26 (ILLFLAAGLAEIGGGYLVWLW), 32-52 (PAGYGIAGALILIVYGILPTF), 61-81 (VYAAYGGVFIVLAVLWGWLVD), and 87-107 (LYDWIGAFICLIGVCVILFAP).

Belongs to the UPF0060 family.

The protein localises to the cell membrane. The chain is UPF0060 membrane protein YfjF (yfjF) from Bacillus subtilis (strain 168).